The primary structure comprises 391 residues: Tryptophan synthase beta chain (391 aa).

Lysine 84 is subject to N6-(pyridoxal phosphate)lysine.

The protein belongs to the TrpB family. In terms of assembly, tetramer of two alpha and two beta chains. Pyridoxal 5'-phosphate serves as cofactor.

It catalyses the reaction (1S,2R)-1-C-(indol-3-yl)glycerol 3-phosphate + L-serine = D-glyceraldehyde 3-phosphate + L-tryptophan + H2O. It functions in the pathway amino-acid biosynthesis; L-tryptophan biosynthesis; L-tryptophan from chorismate: step 5/5. In terms of biological role, the beta subunit is responsible for the synthesis of L-tryptophan from indole and L-serine. The sequence is that of Tryptophan synthase beta chain from Caldanaerobacter subterraneus subsp. tengcongensis (strain DSM 15242 / JCM 11007 / NBRC 100824 / MB4) (Thermoanaerobacter tengcongensis).